A 573-amino-acid polypeptide reads, in one-letter code: Adenine deaminase 2 (573 aa).

Belongs to the metallo-dependent hydrolases superfamily. Adenine deaminase family. Requires Mn(2+) as cofactor.

It carries out the reaction adenine + H2O + H(+) = hypoxanthine + NH4(+). The sequence is that of Adenine deaminase 2 from Shouchella clausii (strain KSM-K16) (Alkalihalobacillus clausii).